Reading from the N-terminus, the 788-residue chain is Structure-specific endonuclease subunit SLX4 (788 aa).

Disordered regions lie at residues 59-86, 562-584, and 599-622; these read LQNE…DNNR, KRQP…HDNS, and DLVN…PSSP. Positions 562–573 are enriched in basic and acidic residues; it reads KRQPVDSENEIR. Positions 612 to 622 are enriched in polar residues; that stretch reads DTSVLQVPSSP.

It belongs to the SLX4 family. Forms a heterodimer with SLX1. In terms of processing, phosphorylated in response to DNA damage.

Its subcellular location is the nucleus. In terms of biological role, regulatory subunit of the SLX1-SLX4 structure-specific endonuclease that resolves DNA secondary structures generated during DNA repair and recombination. Has endonuclease activity towards branched DNA substrates, introducing single-strand cuts in duplex DNA close to junctions with ss-DNA. The sequence is that of Structure-specific endonuclease subunit SLX4 from Debaryomyces hansenii (strain ATCC 36239 / CBS 767 / BCRC 21394 / JCM 1990 / NBRC 0083 / IGC 2968) (Yeast).